The primary structure comprises 612 residues: DNA mismatch repair protein MutL (612 aa).

Belongs to the DNA mismatch repair MutL/HexB family.

Functionally, this protein is involved in the repair of mismatches in DNA. It is required for dam-dependent methyl-directed DNA mismatch repair. May act as a 'molecular matchmaker', a protein that promotes the formation of a stable complex between two or more DNA-binding proteins in an ATP-dependent manner without itself being part of a final effector complex. The chain is DNA mismatch repair protein MutL from Bartonella quintana (strain Toulouse) (Rochalimaea quintana).